Consider the following 173-residue polypeptide: DNA-directed RNA polymerase subunit delta (173 aa).

The 68-residue stretch at 14-81 folds into the HTH HARE-type domain; it reads MALVEIAHEL…SDQTWGLRSW (68 aa). Residues 110 to 173 are disordered; the sequence is LDLDEFEEID…DYDDEEEEIK (64 aa).

Belongs to the RpoE family. RNAP is composed of a core of 2 alpha, a beta and a beta' subunit. The core is associated with a delta subunit, and at least one of epsilon or omega. When a sigma factor is associated with the core the holoenzyme is formed, which can initiate transcription.

Its function is as follows. Participates in both the initiation and recycling phases of transcription. In the presence of the delta subunit, RNAP displays an increased specificity of transcription, a decreased affinity for nucleic acids, and an increased efficiency of RNA synthesis because of enhanced recycling. May function in sigma factor switching. It displaces RNA bound to RNA polymerase in a binary complex. This is DNA-directed RNA polymerase subunit delta from Bacillus subtilis (strain 168).